The following is a 135-amino-acid chain: Ribosome-binding factor A (135 aa).

This sequence belongs to the RbfA family. As to quaternary structure, monomer. Binds 30S ribosomal subunits, but not 50S ribosomal subunits or 70S ribosomes.

The protein resides in the cytoplasm. Its function is as follows. One of several proteins that assist in the late maturation steps of the functional core of the 30S ribosomal subunit. Associates with free 30S ribosomal subunits (but not with 30S subunits that are part of 70S ribosomes or polysomes). Required for efficient processing of 16S rRNA. May interact with the 5'-terminal helix region of 16S rRNA. This chain is Ribosome-binding factor A, found in Hahella chejuensis (strain KCTC 2396).